The primary structure comprises 447 residues: N-succinylarginine dihydrolase (447 aa).

Substrate-binding positions include 19-28 (AGLSFGNEAS), Asn-110, and 137-138 (HR). Glu-174 is an active-site residue. Arg-212 contacts substrate. Residue His-248 is part of the active site. Residues Asp-250 and Asn-359 each coordinate substrate. The active-site Nucleophile is the Cys-365.

It belongs to the succinylarginine dihydrolase family. In terms of assembly, homodimer.

It catalyses the reaction N(2)-succinyl-L-arginine + 2 H2O + 2 H(+) = N(2)-succinyl-L-ornithine + 2 NH4(+) + CO2. It functions in the pathway amino-acid degradation; L-arginine degradation via AST pathway; L-glutamate and succinate from L-arginine: step 2/5. Catalyzes the hydrolysis of N(2)-succinylarginine into N(2)-succinylornithine, ammonia and CO(2). The polypeptide is N-succinylarginine dihydrolase (Escherichia coli (strain SE11)).